The chain runs to 344 residues: Heat-inducible transcription repressor HrcA (344 aa).

Belongs to the HrcA family.

Functionally, negative regulator of class I heat shock genes (grpE-dnaK-dnaJ and groELS operons). Prevents heat-shock induction of these operons. The sequence is that of Heat-inducible transcription repressor HrcA from Streptococcus equi subsp. equi (strain 4047).